A 309-amino-acid polypeptide reads, in one-letter code: MTLGNSTEVTEFYLLGFGAQHEFWCILFIVFLLIYVTSIMGNSGIILLINTDSRFQTLTYFFLQHLAFVDICYTSAITPKMLQSFTEEKNLMLFQGCVIQFLVYATFATSDCYLLAMMAVDPYVAICKPLHYTVIMSRTVCIRLVAGSYIMGSINASVQTGFTCSLSFCKSNSINHFFCDVPPILALSCSNVDINIMLLVVFVGSNLIFTGLVVIFSYIYIMATILKMSSSAGRKKSFSTCASHLTAVTIFYGTLSYMYLQSHSNNSQENMKVAFIFYGTVIPMLNPLIYSLRNKEVKEALKVIGKKLF.

Topologically, residues 1–25 (MTLGNSTEVTEFYLLGFGAQHEFWC) are extracellular. N-linked (GlcNAc...) asparagine glycosylation occurs at asparagine 5. Residues 26 to 46 (ILFIVFLLIYVTSIMGNSGII) form a helical membrane-spanning segment. Residues 47–54 (LLINTDSR) lie on the Cytoplasmic side of the membrane. The helical transmembrane segment at 55–75 (FQTLTYFFLQHLAFVDICYTS) threads the bilayer. The Extracellular segment spans residues 76–99 (AITPKMLQSFTEEKNLMLFQGCVI). An intrachain disulfide couples cysteine 97 to cysteine 189. The helical transmembrane segment at 100 to 120 (QFLVYATFATSDCYLLAMMAV) threads the bilayer. Residues 121–133 (DPYVAICKPLHYT) are Cytoplasmic-facing. The helical transmembrane segment at 134–154 (VIMSRTVCIRLVAGSYIMGSI) threads the bilayer. N-linked (GlcNAc...) asparagine glycosylation is present at asparagine 155. At 155 to 196 (NASVQTGFTCSLSFCKSNSINHFFCDVPPILALSCSNVDINI) the chain is on the extracellular side. Residues 197–217 (MLLVVFVGSNLIFTGLVVIFS) traverse the membrane as a helical segment. Topologically, residues 218–237 (YIYIMATILKMSSSAGRKKS) are cytoplasmic. A helical transmembrane segment spans residues 238–258 (FSTCASHLTAVTIFYGTLSYM). Over 259–271 (YLQSHSNNSQENM) the chain is Extracellular. The N-linked (GlcNAc...) asparagine glycan is linked to asparagine 265. The chain crosses the membrane as a helical span at residues 272 to 292 (KVAFIFYGTVIPMLNPLIYSL). The Cytoplasmic segment spans residues 293–309 (RNKEVKEALKVIGKKLF).

The protein belongs to the G-protein coupled receptor 1 family.

It localises to the cell membrane. Its function is as follows. Odorant receptor. This is Olfactory receptor 5AK2 (OR5AK2) from Homo sapiens (Human).